A 204-amino-acid polypeptide reads, in one-letter code: phospholipase A2 inhibitor and Ly6/PLAUR domain-containing protein (204 aa).

The first 26 residues, 1 to 26, serve as a signal peptide directing secretion; that stretch reads MRLSRRPETFLLAFVLLCTLLGLGCP. Residues 27–117 form the UPAR/Ly6 domain; it reads LHCEICTAAG…NSAFLSVPLT (91 aa). Disulfide bonds link Cys29/Cys53, Cys32/Cys39, Cys46/Cys74, Cys80/Cys101, Cys102/Cys107, Cys126/Cys151, and Cys144/Cys172.

The protein belongs to the CNF-like-inhibitor family.

It localises to the secreted. This is phospholipase A2 inhibitor and Ly6/PLAUR domain-containing protein (PINLYP) from Homo sapiens (Human).